The primary structure comprises 400 residues: Bifunctional arginine demethylase and lysyl-hydroxylase psr-1 (400 aa).

A JmjC domain is found at 146–310; the sequence is RKTKKLSEDY…LVWPKTVKGR (165 aa). Thr-189 serves as a coordination point for substrate. Residues His-192 and Asp-194 each contribute to the Fe cation site. A 2-oxoglutarate-binding site is contributed by Asn-202. Lys-209 contacts substrate. Position 278 (His-278) interacts with Fe cation. 2-oxoglutarate is bound at residue Thr-290. Residues 342-400 form a disordered region; the sequence is DMNESSSDSSSSSSSSDDSSDESDCDDSGRCGGRKRKNDDRSNECPEKMSTTYFQNSLV. Over residues 346 to 358 the composition is skewed to low complexity; the sequence is SSSDSSSSSSSSD. Basic and acidic residues predominate over residues 378–388; the sequence is KNDDRSNECPE. Residues 390 to 400 are compositionally biased toward polar residues; sequence MSTTYFQNSLV.

It belongs to the JMJD6 family. In terms of assembly, interacts with ced-5 and ced-12. It depends on Fe(2+) as a cofactor.

It localises to the nucleus. Its function is as follows. Dioxygenase that can both act as a histone arginine demethylase and a lysyl-hydroxylase. The protein is Bifunctional arginine demethylase and lysyl-hydroxylase psr-1 (psr-1) of Caenorhabditis elegans.